Here is a 150-residue protein sequence, read N- to C-terminus: Cell division protein SepF (150 aa).

It belongs to the SepF family. In terms of assembly, homodimer. Interacts with FtsZ.

Its subcellular location is the cytoplasm. Cell division protein that is part of the divisome complex and is recruited early to the Z-ring. Probably stimulates Z-ring formation, perhaps through the cross-linking of FtsZ protofilaments. Its function overlaps with FtsA. This chain is Cell division protein SepF, found in Clostridium beijerinckii (strain ATCC 51743 / NCIMB 8052) (Clostridium acetobutylicum).